A 156-amino-acid chain; its full sequence is D-aminoacyl-tRNA deacylase (156 aa).

The Gly-cisPro motif, important for rejection of L-amino acids signature appears at 142–143; sequence GP.

It belongs to the DTD family. Homodimer.

It is found in the cytoplasm. It catalyses the reaction glycyl-tRNA(Ala) + H2O = tRNA(Ala) + glycine + H(+). The catalysed reaction is a D-aminoacyl-tRNA + H2O = a tRNA + a D-alpha-amino acid + H(+). In terms of biological role, an aminoacyl-tRNA editing enzyme that deacylates mischarged D-aminoacyl-tRNAs. Also deacylates mischarged glycyl-tRNA(Ala), protecting cells against glycine mischarging by AlaRS. Acts via tRNA-based rather than protein-based catalysis; rejects L-amino acids rather than detecting D-amino acids in the active site. By recycling D-aminoacyl-tRNA to D-amino acids and free tRNA molecules, this enzyme counteracts the toxicity associated with the formation of D-aminoacyl-tRNA entities in vivo and helps enforce protein L-homochirality. This is D-aminoacyl-tRNA deacylase from Delftia acidovorans (strain DSM 14801 / SPH-1).